We begin with the raw amino-acid sequence, 280 residues long: Ribosomal RNA small subunit methyltransferase A (280 aa).

6 residues coordinate S-adenosyl-L-methionine: H13, L15, G40, E61, D85, and N106. A disordered region spans residues 258-280 (RPPADVEDANAPHTEQGKGDNSQ).

This sequence belongs to the class I-like SAM-binding methyltransferase superfamily. rRNA adenine N(6)-methyltransferase family. RsmA subfamily.

The protein localises to the cytoplasm. It carries out the reaction adenosine(1518)/adenosine(1519) in 16S rRNA + 4 S-adenosyl-L-methionine = N(6)-dimethyladenosine(1518)/N(6)-dimethyladenosine(1519) in 16S rRNA + 4 S-adenosyl-L-homocysteine + 4 H(+). Specifically dimethylates two adjacent adenosines (A1518 and A1519) in the loop of a conserved hairpin near the 3'-end of 16S rRNA in the 30S particle. May play a critical role in biogenesis of 30S subunits. In Alcanivorax borkumensis (strain ATCC 700651 / DSM 11573 / NCIMB 13689 / SK2), this protein is Ribosomal RNA small subunit methyltransferase A.